Here is a 256-residue protein sequence, read N- to C-terminus: Triosephosphate isomerase (256 aa).

9–11 (NWK) is a substrate binding site. His97 functions as the Electrophile in the catalytic mechanism. Glu169 functions as the Proton acceptor in the catalytic mechanism. Substrate is bound by residues Gly175, Ser214, and 235-236 (GG).

The protein belongs to the triosephosphate isomerase family. Homodimer.

Its subcellular location is the cytoplasm. It carries out the reaction D-glyceraldehyde 3-phosphate = dihydroxyacetone phosphate. The protein operates within carbohydrate biosynthesis; gluconeogenesis. Its pathway is carbohydrate degradation; glycolysis; D-glyceraldehyde 3-phosphate from glycerone phosphate: step 1/1. Its function is as follows. Involved in the gluconeogenesis. Catalyzes stereospecifically the conversion of dihydroxyacetone phosphate (DHAP) to D-glyceraldehyde-3-phosphate (G3P). In Aliivibrio fischeri (strain ATCC 700601 / ES114) (Vibrio fischeri), this protein is Triosephosphate isomerase.